The primary structure comprises 387 residues: MENVVIIDAVRTPMGRSKGGAFRHVRAEDLSAHLMRAVISRNPGLNAAEIDDIYWGCVQQTLEQGFNIARNASLLAEIPHSVPAVTVNRLCGSSMQALHDGARAIMVGDAKISLIGGVEHMGHVPMNHGVDFHPGMGRTVAKAAGMMGLTAEMLAKIHNISRQSQDEFAFRSHQRAYAATQAGHFAKEIVATNGHDAEGVLKRFDFDEVIRPETNLSGLAALRPAFDPVNGTVTAGTSSALSDGASAMLIMSESRAKSLGLTPRARIRSMAVVGCDPSIMGYGPVPASQLALKRAGLELADIGLFELNEAFAAQSLACLKGLGLLESMDDKVNLNGGAIALGHPLGCSGARISTTLLNLMERRDVQFGLATMCIGLGQGIATVFERL.

C91 functions as the Acyl-thioester intermediate in the catalytic mechanism. Residues H343 and C373 each act as proton acceptor in the active site.

Belongs to the thiolase-like superfamily. Thiolase family. Heterotetramer of two alpha chains (FadB) and two beta chains (FadA).

The protein localises to the cytoplasm. The catalysed reaction is an acyl-CoA + acetyl-CoA = a 3-oxoacyl-CoA + CoA. It participates in lipid metabolism; fatty acid beta-oxidation. In terms of biological role, catalyzes the final step of fatty acid oxidation in which acetyl-CoA is released and the CoA ester of a fatty acid two carbons shorter is formed. The sequence is that of 3-ketoacyl-CoA thiolase from Yersinia pseudotuberculosis serotype O:1b (strain IP 31758).